The following is a 99-amino-acid chain: MAKGQSLQDPYLNALRRERIPVSIYLVNGIKLQGQIESFDQFVILLKNTVNQMVYKHAISTVVPARSVSHHNNNAQQQYQQQAAQAASAQSNETSSQAE.

The Sm domain occupies 9-68 (DPYLNALRRERIPVSIYLVNGIKLQGQIESFDQFVILLKNTVNQMVYKHAISTVVPARSV). A disordered region spans residues 67 to 99 (SVSHHNNNAQQQYQQQAAQAASAQSNETSSQAE). Positions 72–99 (NNNAQQQYQQQAAQAASAQSNETSSQAE) are enriched in low complexity.

This sequence belongs to the Hfq family. As to quaternary structure, homohexamer.

Its function is as follows. RNA chaperone that binds small regulatory RNA (sRNAs) and mRNAs to facilitate mRNA translational regulation in response to envelope stress, environmental stress and changes in metabolite concentrations. Also binds with high specificity to tRNAs. This Actinobacillus succinogenes (strain ATCC 55618 / DSM 22257 / CCUG 43843 / 130Z) protein is RNA-binding protein Hfq.